The following is a 23-amino-acid chain: Testis ecdysiotropin peptide B (23 aa).

Functionally, stimulates synthesis of ecdysteroid in the testes of larvae and pupae. In Lymantria dispar (Gypsy moth), this protein is Testis ecdysiotropin peptide B.